The sequence spans 579 residues: UPF0329 protein ECU06_1620 (579 aa).

2 disordered regions span residues E325–A360 and A370–K389. A compositionally biased stretch (basic residues) spans K329–S338. The span at K345–A360 shows a compositional bias: acidic residues.

It belongs to the UPF0329 family.

The chain is UPF0329 protein ECU06_1620 from Encephalitozoon cuniculi (strain GB-M1) (Microsporidian parasite).